Reading from the N-terminus, the 355-residue chain is Elongation factor Ts (355 aa).

The segment at 82–85 (TDFV) is involved in Mg(2+) ion dislocation from EF-Tu.

Belongs to the EF-Ts family.

The protein resides in the cytoplasm. In terms of biological role, associates with the EF-Tu.GDP complex and induces the exchange of GDP to GTP. It remains bound to the aminoacyl-tRNA.EF-Tu.GTP complex up to the GTP hydrolysis stage on the ribosome. In Helicobacter acinonychis (strain Sheeba), this protein is Elongation factor Ts.